The following is a 184-amino-acid chain: Tumor necrosis factor alpha-induced protein 8-like protein 2 (184 aa).

At Ser3 the chain carries Phosphoserine.

This sequence belongs to the TNFAIP8 family. TNFAIP8L2 subfamily. As to quaternary structure, may interact with CASP8; however, such result is unclear since could not reproduce the interaction with CASP8. Interacts with RAC1. In terms of processing, phosphorylated by TAK1/MAP3K7; this phosphorylation triggers association with BTRC and subsequent ubiquitination and degradation. Post-translationally, ubiquitinated in a BTRC-depdent manner; leading to degradation mediated through the proteasome pathway. Expressed in thymus, spleen, lymph node and small intestine, but not in liver, heart, muscle, testis, spinal cord or brain. Up-regulated in the spinal cord of mice with experimental autoimmune encephalomyelitis. Constitutively expressed by macrophages, B and T-lymphocytes at various developmental stages.

Its subcellular location is the cytoplasm. The protein localises to the nucleus. It localises to the lysosome. Acts as a negative regulator of innate and adaptive immunity by maintaining immune homeostasis. Plays a regulatory role in the Toll-like signaling pathway by determining the strength of LPS-induced signaling and gene expression. Inhibits TCR-mediated T-cell activation and negatively regulate T-cell function to prevent hyperresponsiveness. Also inhibits autolysosome formation via negatively modulating MTOR activation by interacting with RAC1 and promoting the disassociation of the RAC1-MTOR complex. Plays an essential role in NK-cell biology by acting as a checkpoint and displaying an expression pattern correlating with NK-cell maturation process and by negatively regulating NK-cell maturation and antitumor immunity. Mechanistically, suppresses IL-15-triggered mTOR activity in NK-cells. The chain is Tumor necrosis factor alpha-induced protein 8-like protein 2 (Tnfaip8l2) from Mus musculus (Mouse).